Reading from the N-terminus, the 76-residue chain is Omega-scoloptoxin(13)-Ssm2a (76 aa).

The signal sequence occupies residues 1-22 (MAYIYALIFAIVVCMNTDVIQA).

Contains 4 disulfide bonds. Expressed by the venom gland.

Its subcellular location is the secreted. Inhibits voltage-gated calcium channel (Cav) currents in DRG neurons (IC(50)=1590 nM). The polypeptide is Omega-scoloptoxin(13)-Ssm2a (Scolopendra mutilans (Chinese red-headed centipede)).